The following is a 539-amino-acid chain: Inosine-5'-monophosphate dehydrogenase (539 aa).

2 CBS domains span residues 140–196 (IIVN…DMPI) and 200–257 (MTRE…PRAC). NAD(+) contacts are provided by residues Asp292 and 343–345 (GIG). K(+)-binding residues include Gly345 and Gly347. Ser348 provides a ligand contact to IMP. Cys350 is a binding site for K(+). Catalysis depends on Cys350, which acts as the Thioimidate intermediate. Residues 383–385 (DGG), 406–407 (GS), and 430–434 (YRGMG) each bind IMP. The Proton acceptor role is filled by Arg446. Glu460 lines the IMP pocket. Residues Glu514 and His516 each coordinate K(+). The segment at 517 to 539 (PHDIAITQEAPNYSPDVHSGDAG) is disordered.

It belongs to the IMPDH/GMPR family. As to quaternary structure, homotetramer. Requires K(+) as cofactor.

It carries out the reaction IMP + NAD(+) + H2O = XMP + NADH + H(+). Its pathway is purine metabolism; XMP biosynthesis via de novo pathway; XMP from IMP: step 1/1. Its activity is regulated as follows. Mycophenolic acid (MPA) is a non-competitive inhibitor that prevents formation of the closed enzyme conformation by binding to the same site as the amobile flap. In contrast, mizoribine monophosphate (MZP) is a competitive inhibitor that induces the closed conformation. MPA is a potent inhibitor of mammalian IMPDHs but a poor inhibitor of the bacterial enzymes. MZP is a more potent inhibitor of bacterial IMPDH. Catalyzes the conversion of inosine 5'-phosphate (IMP) to xanthosine 5'-phosphate (XMP), the first committed and rate-limiting step in the de novo synthesis of guanine nucleotides, and therefore plays an important role in the regulation of cell growth. In Rhodopirellula baltica (strain DSM 10527 / NCIMB 13988 / SH1), this protein is Inosine-5'-monophosphate dehydrogenase.